Reading from the N-terminus, the 600-residue chain is Na(+)/dicarboxylate cotransporter 3 (600 aa).

The Cytoplasmic portion of the chain corresponds to 1–16 (MAALAALAKKVWSARR). A helical transmembrane segment spans residues 17–37 (LLVLLLVPLALLPILFALPPK). Residues 38–55 (EGRCLYVILLMAVYWCTE) are Extracellular-facing. A helical membrane pass occupies residues 56-76 (ALPLSVTALLPIILFPFMGIL). Over 77–82 (PSSKVC) the chain is Cytoplasmic. The chain crosses the membrane as a helical span at residues 83-103 (PQYFLDTNFLFLSGLIMASAI). Topologically, residues 104–137 (EERNLHRRIALKVLMLVGVQPARLILGMMVTTSF) are extracellular. The chain crosses the membrane as a helical span at residues 138–158 (LSMWLSNTASTAMMLPIASAI). Residues 159–229 (LKSLFGQRDT…KEEEHRRNIW (71 aa)) lie on the Cytoplasmic side of the membrane. Residues 230–250 (KGFLISIPYSASIGGTATLTG) form a helical membrane-spanning segment. Over 251 to 278 (TAPNLILLGQLKSFFPQCDVVNFGSWFI) the chain is Extracellular. A helical transmembrane segment spans residues 279–299 (FAFPLMLLFLLVGWLWISFLY). At 300–336 (GGMSWRGWRKKNSKLQDVAEDKAKAVIQEEFQNLGPI) the chain is on the cytoplasmic side. Residues 337–357 (KFAEQAVFILFCLFAILLFSR) form a helical membrane-spanning segment. Residues 358–372 (DPKFIPGWASLFAPG) are Extracellular-facing. Residues 373–393 (FVSDAVTGVAIVTILFFFPSQ) form a helical membrane-spanning segment. The Cytoplasmic portion of the chain corresponds to 394 to 422 (KPSLKWWFDFKAPNSETEPLLSWKKAQET). Residues 423–443 (VPWNIILLLGGGFAMAKGCEE) constitute an intramembrane region (helical). The Cytoplasmic portion of the chain corresponds to 444–461 (SGLSAWIGGQLHPLEHVP). A helical membrane pass occupies residues 462–482 (PLLAVLLITVVIAFFTEFASN). Residues 483–505 (TATIIIFLPVLAELAIRLHVHPL) are Extracellular-facing. A helical transmembrane segment spans residues 506-526 (YLMIPGTVSCSYAFMLPVSTP). Residues 527–546 (PNSIAFSTGHLLVKDMVRTG) are Cytoplasmic-facing. The helical transmembrane segment at 547-567 (LLMNLMGVLLLSLAMNTWAQA) threads the bilayer. At 568–600 (IFQLGTFPDWANTHAANVTALPPALTNNTVQTL) the chain is on the extracellular side. 2 N-linked (GlcNAc...) asparagine glycosylation sites follow: Asn584 and Asn594.

It belongs to the SLC13A/DASS transporter (TC 2.A.47) family. NADC subfamily. Highly expressed in proximal parts of straight tubules in the kidney. Detected in placenta, in brain, and in liver. Strongly expressed within the meningeal layers of supporting tissue that surround the brain and relatively weakly expressed throughout the cerebral cortex, hippocampus, and cerebellum.

The protein localises to the cell membrane. The catalysed reaction is succinate(out) + 3 Na(+)(out) = succinate(in) + 3 Na(+)(in). It catalyses the reaction 2-oxoglutarate(out) + 3 Na(+)(out) = 2-oxoglutarate(in) + 3 Na(+)(in). The enzyme catalyses N-acetyl-L-aspartate(out) + 3 Na(+)(out) = N-acetyl-L-aspartate(in) + 3 Na(+)(in). It carries out the reaction glutarate(out) + 3 Na(+)(out) = glutarate(in) + 3 Na(+)(in). The catalysed reaction is fumarate(out) + 3 Na(+)(out) = fumarate(in) + 3 Na(+)(in). It catalyses the reaction malate(out) + 3 Na(+)(out) = malate(in) + 3 Na(+)(in). The enzyme catalyses 2,2-dimethylsuccinate(out) + 3 Na(+)(out) = 2,2-dimethylsuccinate(in) + 3 Na(+)(in). It carries out the reaction 2,3-dimethylsuccinate(out) + 3 Na(+)(out) = 2,3-dimethylsuccinate(in) + 3 Na(+)(in). The catalysed reaction is itaconate(out) + 3 Na(+)(out) = itaconate(in) + 3 Na(+)(in). Li(+) decreases succinate transport in the presence of Na(+). High-affinity sodium-dicarboxylate cotransporter that accepts a range of substrates with 4-6 carbon atoms, such as the citric acid cycle intermediates succinate and alpha-ketoglutarate (2-oxoglutarate), as well as other compounds including N-acetyl-L-aspartate. Transports the dicarboxylate into the cell with a probable stoichiometry of 3 Na(+) for 1 divalent dicarboxylate, rendering the process electrogenic. Can transport citrate in a Na(+)-dependent manner, recognizing the divalent form of citrate rather than the trivalent form which is normally found in blood. Imports itaconate in hepatocytes leading to activation of TFEB-dependent lysosomal biogenesis involved in antibacterial innate immune response. The protein is Na(+)/dicarboxylate cotransporter 3 (Slc13a3) of Rattus norvegicus (Rat).